Consider the following 179-residue polypeptide: Ubiquitin-conjugating enzyme E2 2 (179 aa).

A disordered region spans residues 1–28; that stretch reads MSTPARRRLMRDFKRMQQDPPSGVSASP. The UBC core domain occupies 4 to 150; the sequence is PARRRLMRDF…VRETVENSWN (147 aa). Cys88 acts as the Glycyl thioester intermediate in catalysis. The segment at 145-179 is disordered; the sequence is VENSWNDDDDEEEEEEDEDEAEDEDDDDDDNIDED. The span at 149–179 shows a compositional bias: acidic residues; sequence WNDDDDEEEEEEDEDEAEDEDDDDDDNIDED. An acidic tail region spans residues 151-179; that stretch reads DDDDEEEEEEDEDEAEDEDDDDDDNIDED.

This sequence belongs to the ubiquitin-conjugating enzyme family.

Its subcellular location is the cytoplasm. It localises to the nucleus. It catalyses the reaction S-ubiquitinyl-[E1 ubiquitin-activating enzyme]-L-cysteine + [E2 ubiquitin-conjugating enzyme]-L-cysteine = [E1 ubiquitin-activating enzyme]-L-cysteine + S-ubiquitinyl-[E2 ubiquitin-conjugating enzyme]-L-cysteine.. Its pathway is protein modification; protein ubiquitination. Catalyzes the covalent attachment of ubiquitin to other proteins. Plays a role in transcription regulation by catalyzing the monoubiquitination of histone H2B to form H2BK123ub1. H2BK123ub1 gives a specific tag for epigenetic transcriptional activation and is also a prerequisite for H3K4me and H3K79me formation. Also involved in postreplication repair of UV-damaged DNA, in N-end rule-dependent protein degradation and in sporulation. The sequence is that of Ubiquitin-conjugating enzyme E2 2 (UBC2) from Candida albicans (strain SC5314 / ATCC MYA-2876) (Yeast).